The following is a 56-amino-acid chain: Small ribosomal subunit protein uS14A (56 aa).

Cys-21 and Cys-24 together coordinate Zn(2+). A Phosphoserine modification is found at Ser-25. Residues Cys-39 and Cys-42 each contribute to the Zn(2+) site.

This sequence belongs to the universal ribosomal protein uS14 family. In terms of assembly, component of the small ribosomal subunit (SSU). Mature yeast ribosomes consist of a small (40S) and a large (60S) subunit. The 40S small subunit contains 1 molecule of ribosomal RNA (18S rRNA) and 33 different proteins (encoded by 57 genes). The large 60S subunit contains 3 rRNA molecules (25S, 5.8S and 5S rRNA) and 46 different proteins (encoded by 81 genes). It depends on Zn(2+) as a cofactor.

It is found in the cytoplasm. Component of the ribosome, a large ribonucleoprotein complex responsible for the synthesis of proteins in the cell. The small ribosomal subunit (SSU) binds messenger RNAs (mRNAs) and translates the encoded message by selecting cognate aminoacyl-transfer RNA (tRNA) molecules. The large subunit (LSU) contains the ribosomal catalytic site termed the peptidyl transferase center (PTC), which catalyzes the formation of peptide bonds, thereby polymerizing the amino acids delivered by tRNAs into a polypeptide chain. The nascent polypeptides leave the ribosome through a tunnel in the LSU and interact with protein factors that function in enzymatic processing, targeting, and the membrane insertion of nascent chains at the exit of the ribosomal tunnel. This is Small ribosomal subunit protein uS14A from Saccharomyces cerevisiae (strain ATCC 204508 / S288c) (Baker's yeast).